The chain runs to 566 residues: Membrane protein insertase YidC (566 aa).

Helical transmembrane passes span 3–23, 346–366, 369–389, 436–456, and 509–529; these read IKRI…FNAW, GWLW…HAVV, WGWS…WFSA, GGCL…YVII, and MWIL…GLVL.

It belongs to the OXA1/ALB3/YidC family. Type 1 subfamily. As to quaternary structure, interacts with the Sec translocase complex via SecD. Specifically interacts with transmembrane segments of nascent integral membrane proteins during membrane integration.

Its subcellular location is the cell inner membrane. Functionally, required for the insertion and/or proper folding and/or complex formation of integral membrane proteins into the membrane. Involved in integration of membrane proteins that insert both dependently and independently of the Sec translocase complex, as well as at least some lipoproteins. Aids folding of multispanning membrane proteins. This is Membrane protein insertase YidC from Coxiella burnetii (strain RSA 331 / Henzerling II).